Reading from the N-terminus, the 244-residue chain is Protein-L-isoaspartate O-methyltransferase 2 (244 aa).

Serine 88 is a catalytic residue.

This sequence belongs to the methyltransferase superfamily. L-isoaspartyl/D-aspartyl protein methyltransferase family.

It is found in the cytoplasm. The enzyme catalyses [protein]-L-isoaspartate + S-adenosyl-L-methionine = [protein]-L-isoaspartate alpha-methyl ester + S-adenosyl-L-homocysteine. In terms of biological role, catalyzes the methyl esterification of L-isoaspartyl residues in peptides and proteins that result from spontaneous decomposition of normal L-aspartyl and L-asparaginyl residues. It plays a role in the repair and/or degradation of damaged proteins. The protein is Protein-L-isoaspartate O-methyltransferase 2 of Shewanella sediminis (strain HAW-EB3).